Here is a 387-residue protein sequence, read N- to C-terminus: Phosphoglycerate kinase (387 aa).

Substrate contacts are provided by residues 21–23 (DLN), R36, 59–62 (HLGR), R113, and R146. Residues K197, E314, and 340-343 (GGDT) contribute to the ATP site.

This sequence belongs to the phosphoglycerate kinase family. Monomer.

It is found in the cytoplasm. The catalysed reaction is (2R)-3-phosphoglycerate + ATP = (2R)-3-phospho-glyceroyl phosphate + ADP. Its pathway is carbohydrate degradation; glycolysis; pyruvate from D-glyceraldehyde 3-phosphate: step 2/5. This is Phosphoglycerate kinase from Photorhabdus luminescens (Xenorhabdus luminescens).